Reading from the N-terminus, the 368-residue chain is Protein-glutamate methylesterase/protein-glutamine glutaminase 1 (368 aa).

In terms of domain architecture, Response regulatory spans 4 to 121 (KVLVVDDSGF…SRNPDKVRQL (118 aa)). At Asp55 the chain carries 4-aspartylphosphate. Residues 138 to 176 (SLPPLPSATSSSHAPASSSSVGASARVGAGASPAPASTS) form a disordered region. Positions 144–176 (SATSSSHAPASSSSVGASARVGAGASPAPASTS) are enriched in low complexity. One can recognise a CheB-type methylesterase domain in the interval 172–368 (PASTSAAPKR…IGRHLVEACQ (197 aa)). Catalysis depends on residues Ser192, His219, and Asp312.

The protein belongs to the CheB family. Phosphorylated by CheA. Phosphorylation of the N-terminal regulatory domain activates the methylesterase activity.

It localises to the cytoplasm. The enzyme catalyses [protein]-L-glutamate 5-O-methyl ester + H2O = L-glutamyl-[protein] + methanol + H(+). The catalysed reaction is L-glutaminyl-[protein] + H2O = L-glutamyl-[protein] + NH4(+). Its function is as follows. Involved in chemotaxis. Part of a chemotaxis signal transduction system that modulates chemotaxis in response to various stimuli. Catalyzes the demethylation of specific methylglutamate residues introduced into the chemoreceptors (methyl-accepting chemotaxis proteins or MCP) by CheR. Also mediates the irreversible deamidation of specific glutamine residues to glutamic acid. The sequence is that of Protein-glutamate methylesterase/protein-glutamine glutaminase 1 from Pseudomonas aeruginosa (strain ATCC 15692 / DSM 22644 / CIP 104116 / JCM 14847 / LMG 12228 / 1C / PRS 101 / PAO1).